Reading from the N-terminus, the 340-residue chain is uncharacterized protein (340 aa).

Residues 1–20 form the signal peptide; it reads MGGARRLKLDGSIPNQLARA.

This is an uncharacterized protein from Mycobacterium tuberculosis (strain CDC 1551 / Oshkosh).